We begin with the raw amino-acid sequence, 354 residues long: MAIDENKQKALAAALGQIEKQFGKGSIMRLGEDRSMDVETISTGSLSLDIALGAGGLPMGRIVEIYGPESSGKTTLTLQVIAAAQREGKTCAFIDAEHALDPIYAKKLGVDIDNLLCSQPDTGEQALEICDALTRSGAVDVIIVDSVAALTPKAEIEGEIGDSHMGLAARMMSQAMRKLAGNLKNANTLLIFINQIRMKIGVMFGNPETTTGGNALKFYASVRLDIRRIGAIKEGDEVVGSETRVKVVKNKIAAPFKQAEFQIMYGEGINSRGELVDLGVKHKMIEKAGAWYSYNGEKIGQGKANACNFLKENPAIAAELDKKLRDLLLHSGGELVAASGDDFEDDEAETSEQF.

Residue 67–74 (GPESSGKT) participates in ATP binding.

This sequence belongs to the RecA family.

Its subcellular location is the cytoplasm. Can catalyze the hydrolysis of ATP in the presence of single-stranded DNA, the ATP-dependent uptake of single-stranded DNA by duplex DNA, and the ATP-dependent hybridization of homologous single-stranded DNAs. It interacts with LexA causing its activation and leading to its autocatalytic cleavage. This chain is Protein RecA, found in Serratia marcescens.